Consider the following 505-residue polypeptide: ATP synthase subunit alpha (505 aa).

169–176 (GDRQTGKT) lines the ATP pocket.

Belongs to the ATPase alpha/beta chains family. In terms of assembly, F-type ATPases have 2 components, CF(1) - the catalytic core - and CF(0) - the membrane proton channel. CF(1) has five subunits: alpha(3), beta(3), gamma(1), delta(1), epsilon(1). CF(0) has three main subunits: a(1), b(2) and c(9-12). The alpha and beta chains form an alternating ring which encloses part of the gamma chain. CF(1) is attached to CF(0) by a central stalk formed by the gamma and epsilon chains, while a peripheral stalk is formed by the delta and b chains.

Its subcellular location is the cell membrane. It catalyses the reaction ATP + H2O + 4 H(+)(in) = ADP + phosphate + 5 H(+)(out). In terms of biological role, produces ATP from ADP in the presence of a proton gradient across the membrane. The alpha chain is a regulatory subunit. This is ATP synthase subunit alpha from Clostridium acetobutylicum (strain ATCC 824 / DSM 792 / JCM 1419 / IAM 19013 / LMG 5710 / NBRC 13948 / NRRL B-527 / VKM B-1787 / 2291 / W).